Here is a 606-residue protein sequence, read N- to C-terminus: NADH-ubiquinone oxidoreductase chain 5 (606 aa).

Helical transmembrane passes span 4–24, 38–58, 87–107, 114–134, 140–160, 171–191, 213–233, 241–261, 273–293, 301–320, 325–347, 366–386, 409–429, 457–477, 488–508, and 583–603; these read FPSLMLTSLLMLTLPIITTTI, NIISYAFITSLIPTMMFIHSG, MIFVPVALFVTWSIMEFSMWY, ITQFFKYLLMFLITMMILVTA, LFIGWEGVGIMSFLLISWWYG, AILYNRIGDIGFIMSMAWFLF, LMGLLLAATGKSAQFGLHPWL, TPVSALLHSSTMVVAGVFLLI, VQTFTLCLGAITTLFTAICAL, IIAFSTSSQLGLMIVTIGIN, AFLHICTHAFFKAMLFMCSGSII, MPFTSTSLIIGSLALTGMPFL, LLITLIATSLTAAYSTRMIFF, LLIGSIFAGFFISNNIYPTTI, LTALAVTILGFMMALELSLAT, and LIKLYFLSFLVTLTLSLLLLM.

It belongs to the complex I subunit 5 family. In terms of assembly, core subunit of respiratory chain NADH dehydrogenase (Complex I) which is composed of 45 different subunits.

It is found in the mitochondrion inner membrane. The enzyme catalyses a ubiquinone + NADH + 5 H(+)(in) = a ubiquinol + NAD(+) + 4 H(+)(out). Functionally, core subunit of the mitochondrial membrane respiratory chain NADH dehydrogenase (Complex I) which catalyzes electron transfer from NADH through the respiratory chain, using ubiquinone as an electron acceptor. Essential for the catalytic activity and assembly of complex I. The chain is NADH-ubiquinone oxidoreductase chain 5 (MT-ND5) from Ceratotherium simum (White rhinoceros).